The sequence spans 255 residues: uncharacterized protein (255 aa).

The first 28 residues, Met1 to Ala28, serve as a signal peptide directing secretion. Residues Asn38, Asn61, and Asn83 are each glycosylated (N-linked (GlcNAc...) asparagine).

It is found in the secreted. This is an uncharacterized protein from Dictyostelium discoideum (Social amoeba).